Reading from the N-terminus, the 299-residue chain is Oxygen-dependent coproporphyrinogen-III oxidase (299 aa).

Ser-92 serves as a coordination point for substrate. Residues His-96 and His-106 each coordinate a divalent metal cation. The active-site Proton donor is His-106. 108–110 (NVR) contacts substrate. A divalent metal cation contacts are provided by His-145 and His-175. The interval 240–275 (YVEFNLVWDRGTLFGLQTGGRTESILMSMPPLVRWE) is important for dimerization. Substrate is bound at residue 258–260 (GGR).

This sequence belongs to the aerobic coproporphyrinogen-III oxidase family. As to quaternary structure, homodimer. The cofactor is a divalent metal cation.

The protein resides in the cytoplasm. The enzyme catalyses coproporphyrinogen III + O2 + 2 H(+) = protoporphyrinogen IX + 2 CO2 + 2 H2O. Its pathway is porphyrin-containing compound metabolism; protoporphyrin-IX biosynthesis; protoporphyrinogen-IX from coproporphyrinogen-III (O2 route): step 1/1. In terms of biological role, involved in the heme biosynthesis. Catalyzes the aerobic oxidative decarboxylation of propionate groups of rings A and B of coproporphyrinogen-III to yield the vinyl groups in protoporphyrinogen-IX. The sequence is that of Oxygen-dependent coproporphyrinogen-III oxidase from Shigella dysenteriae serotype 1 (strain Sd197).